A 445-amino-acid chain; its full sequence is Endoplasmic reticulum membrane adapter protein XK (445 aa).

The Cytoplasmic portion of the chain corresponds to 1 to 2 (MK). Residues 3–23 (FPASVLASVFLFVAETMAALY) traverse the membrane as a helical segment. Over 24–37 (LSSTYRSAGDRMWQ) the chain is Extracellular. The helical transmembrane segment at 38–58 (ALTLFFSLMPCTLVQLTLLFV) threads the bilayer. Residues 59 to 68 (HRDLSRDRPL) lie on the Cytoplasmic side of the membrane. The helical transmembrane segment at 69–89 (VLLMHLLQLGPLYRCCEVFCI) threads the bilayer. Topologically, residues 90 to 140 (YCQSDQNEEPYVSITKKRQMPKDGLSEEVEKEVGQSEGKLFTHRSAFSRAS) are extracellular. Residue S115 is modified to Phosphoserine. A helical membrane pass occupies residues 141–161 (VIQAFLGSAPQLTLQLYITVL). Residues 162–170 (EQNITTGRF) lie on the Cytoplasmic side of the membrane. Residues 171 to 191 (IMVLSLLSIVYGALRCNILAI) form a helical membrane-spanning segment. The Extracellular segment spans residues 192–207 (KIKYDEYEVKVKPLAY). The chain crosses the membrane as a helical span at residues 208–228 (VCIFLWRSFEIATRVIVLVLF). Residues 229-234 (TSVLKI) are Cytoplasmic-facing. A helical transmembrane segment spans residues 235 to 255 (WVVVVILVNFFSFFLYPWILF). The Extracellular segment spans residues 256 to 276 (WNSGSPFPENIEKALTRVGTT). The chain crosses the membrane as a helical span at residues 277–297 (IVLGFLTLLYAGINMFCWSAV). Over 298-316 (QLKIDNPELISKSQNWYRL) the chain is Cytoplasmic. Residues 317–337 (LIYYMMRFVENSVLLLLWFFF) form a helical membrane-spanning segment. At 338-348 (KTDIYMYVCAP) the chain is on the extracellular side. The helical transmembrane segment at 349 to 369 (LLILQLLIGYCTSILFMLVFY) threads the bilayer. Residues 370 to 445 (QFFHPCKKLF…IWTAVDLCST (76 aa)) lie on the Cytoplasmic side of the membrane.

Belongs to the XK family. In terms of assembly, heterodimer with Kell; disulfide-linked. Interacts with VPS13A.

The protein localises to the endoplasmic reticulum membrane. Recruits the lipid transfer protein VPS13A from lipid droplets to the endoplasmic reticulum (ER) membrane. In Rattus norvegicus (Rat), this protein is Endoplasmic reticulum membrane adapter protein XK.